A 171-amino-acid polypeptide reads, in one-letter code: Envelope glycoprotein N (171 aa).

Residues 1 to 132 lie on the Virion surface side of the membrane; that stretch reads MARINSNSGT…CSALKYRIYV (132 aa). A helical transmembrane segment spans residues 133–153; the sequence is SSFVSVLNIILYVLLFLASVV. The Intravirion portion of the chain corresponds to 154–171; it reads YIRYLCHQSITTETVKDY.

This sequence belongs to the herpesviridae glycoprotein N family. In terms of assembly, interacts (via N-terminus) with gM (via N-terminus). The gM-gN heterodimer forms the gCII complex.

It localises to the virion membrane. Its subcellular location is the host membrane. The protein resides in the host Golgi apparatus. It is found in the host trans-Golgi network. In terms of biological role, envelope glycoprotein necessary for proper maturation of gM and modulation of its membrane fusion activity. Also plays a critical role in virion morphogenesis. The polypeptide is Envelope glycoprotein N (Elephas maximus (Indian elephant)).